We begin with the raw amino-acid sequence, 1227 residues long: Codanin-1 (1227 aa).

The residue at position 2 (Ala2) is an N-acetylalanine. The disordered stretch occupies residues Arg63–Ala294. A Phosphothreonine modification is found at Thr71. Basic and acidic residues predominate over residues Ala128–Glu137. The span at Gly155–Ser167 shows a compositional bias: low complexity. The interaction with ASF1A/B stretch occupies residues Pro188–Leu208. Polar residues predominate over residues Cys214–Asp232. Over residues Leu247–Lys260 the composition is skewed to basic and acidic residues. Residues Ser265 and Ser285 each carry the phosphoserine modification. 2 helical membrane passes run Cys312–Leu332 and Phe626–Leu646.

As to quaternary structure, found in a cytosolic complex with ASF1A, ASF1B, IPO4 and histones H3.1 and H4. Ubiquitously expressed. Isoform 3 is not found in erythroid cells.

It is found in the cytoplasm. The protein localises to the nucleus. Its subcellular location is the membrane. Functionally, may act as a negative regulator of ASF1 in chromatin assembly. This chain is Codanin-1 (CDAN1), found in Homo sapiens (Human).